Consider the following 553-residue polypeptide: Chaperonin GroEL 1 (553 aa).

ATP contacts are provided by residues 29 to 32, 86 to 90, glycine 413, 476 to 478, and aspartate 492; these read TIGP, DGTTT, and NAL. The segment at 521–542 is disordered; that stretch reads KPEPPAAPAPGGDPMGGMGGMG. Residues 533–542 show a composition bias toward gly residues; that stretch reads DPMGGMGGMG.

This sequence belongs to the chaperonin (HSP60) family. Forms a cylinder of 14 subunits composed of two heptameric rings stacked back-to-back. Interacts with the co-chaperonin GroES.

The protein localises to the cytoplasm. The enzyme catalyses ATP + H2O + a folded polypeptide = ADP + phosphate + an unfolded polypeptide.. Functionally, together with its co-chaperonin GroES, plays an essential role in assisting protein folding. The GroEL-GroES system forms a nano-cage that allows encapsulation of the non-native substrate proteins and provides a physical environment optimized to promote and accelerate protein folding. The chain is Chaperonin GroEL 1 from Synechococcus sp. (strain WH7803).